A 334-amino-acid polypeptide reads, in one-letter code: Phospho-N-acetylmuramoyl-pentapeptide-transferase (334 aa).

9 helical membrane passes run 5-25, 52-72, 81-101, 116-136, 148-168, 181-200, 230-250, 256-276, and 309-329; these read VVWLAAGISFLVTLVLGPVTI, PTMGGIMFLIGIAVAGAVLLV, GLVVLAVTLGYGLIGFLDDFI, KILGQLVFATVLAVVAVFKLG, GISFDLGWWPFFFLTLFVLLG, GLASGATVFTATAFAILALV, VFMGDTGSLALGGALGAGAVV, LLVVIGGLYVLETLSVIIQVI, and FWLLSFLFSLVGLLGAQDFWL.

This sequence belongs to the glycosyltransferase 4 family. MraY subfamily. Mg(2+) is required as a cofactor.

Its subcellular location is the cell membrane. The catalysed reaction is UDP-N-acetyl-alpha-D-muramoyl-L-alanyl-gamma-D-glutamyl-meso-2,6-diaminopimeloyl-D-alanyl-D-alanine + di-trans,octa-cis-undecaprenyl phosphate = di-trans,octa-cis-undecaprenyl diphospho-N-acetyl-alpha-D-muramoyl-L-alanyl-D-glutamyl-meso-2,6-diaminopimeloyl-D-alanyl-D-alanine + UMP. Its pathway is cell wall biogenesis; peptidoglycan biosynthesis. Catalyzes the initial step of the lipid cycle reactions in the biosynthesis of the cell wall peptidoglycan: transfers peptidoglycan precursor phospho-MurNAc-pentapeptide from UDP-MurNAc-pentapeptide onto the lipid carrier undecaprenyl phosphate, yielding undecaprenyl-pyrophosphoryl-MurNAc-pentapeptide, known as lipid I. This chain is Phospho-N-acetylmuramoyl-pentapeptide-transferase, found in Desulforamulus reducens (strain ATCC BAA-1160 / DSM 100696 / MI-1) (Desulfotomaculum reducens).